The sequence spans 469 residues: 3-isopropylmalate dehydratase large subunit (469 aa).

[4Fe-4S] cluster-binding residues include Cys350, Cys410, and Cys413.

Belongs to the aconitase/IPM isomerase family. LeuC type 1 subfamily. Heterodimer of LeuC and LeuD. [4Fe-4S] cluster is required as a cofactor.

It carries out the reaction (2R,3S)-3-isopropylmalate = (2S)-2-isopropylmalate. It functions in the pathway amino-acid biosynthesis; L-leucine biosynthesis; L-leucine from 3-methyl-2-oxobutanoate: step 2/4. Its function is as follows. Catalyzes the isomerization between 2-isopropylmalate and 3-isopropylmalate, via the formation of 2-isopropylmaleate. The protein is 3-isopropylmalate dehydratase large subunit of Mesorhizobium japonicum (strain LMG 29417 / CECT 9101 / MAFF 303099) (Mesorhizobium loti (strain MAFF 303099)).